The following is a 304-amino-acid chain: Putative S-adenosyl-L-methionine-dependent methyltransferase MSMEG_1481/MSMEI_1445 (304 aa).

S-adenosyl-L-methionine is bound by residues aspartate 127 and 156 to 157; that span reads DL.

Belongs to the UPF0677 family.

Its function is as follows. Exhibits S-adenosyl-L-methionine-dependent methyltransferase activity. The sequence is that of Putative S-adenosyl-L-methionine-dependent methyltransferase MSMEG_1481/MSMEI_1445 from Mycolicibacterium smegmatis (strain ATCC 700084 / mc(2)155) (Mycobacterium smegmatis).